Here is a 371-residue protein sequence, read N- to C-terminus: Cytoplasmic tRNA 2-thiolation protein 1 (371 aa).

It belongs to the TtcA family. CTU1/NCS6/ATPBD3 subfamily.

It is found in the cytoplasm. The protein operates within tRNA modification; 5-methoxycarbonylmethyl-2-thiouridine-tRNA biosynthesis. Its function is as follows. Plays a central role in 2-thiolation of mcm(5)S(2)U at tRNA wobble positions of tRNA(Lys), tRNA(Glu) and tRNA(Gln). Directly binds tRNAs and probably acts by catalyzing adenylation of tRNAs, an intermediate required for 2-thiolation. It is unclear whether it acts as a sulfurtransferase that transfers sulfur from thiocarboxylated URM1 onto the uridine of tRNAs at wobble position. Prior mcm(5) tRNA modification by the elongator complex is required for 2-thiolation. May also be involved in protein urmylation. This is Cytoplasmic tRNA 2-thiolation protein 1 from Kluyveromyces lactis (strain ATCC 8585 / CBS 2359 / DSM 70799 / NBRC 1267 / NRRL Y-1140 / WM37) (Yeast).